We begin with the raw amino-acid sequence, 436 residues long: MGKPVVAIVGRPNVGKSTIFNRIAGERISIVEDTPGVTRDRIYSSAEWLNYDFNLIDTGGIDIGDEPFLTQIRQQAEIAMDEADVIIFMVNGREGVTSADEEVAKILYRTKKPVVLAVNKLDNTEMRANIYDFYALGFGEPYPISGTHGLGLGDLLDACAEHFKNIPETKYSDDVVQFCLIGRPNVGKSSLVNAMLGEERVIVSNVAGTTRDAVDTAFTYNQQEFVIVDTAGMRKKGKVYETTEKYSVLRALKAIDRSDVVGVVLNAEEGILEQDKRIAGYAHEAGKAVVIIVNKWDAVDKDERTMKEFEQNIREHFQFLDYAPVLFMSALTTKRIHTLMPAIIKASENHSLRVQTNVLNDVIMDAVAMNPTPTHNGSRLKIYYATQVAVKPPSFVVFVNDPELMHFSYERFLENRIRDAFGFEGTPIKIFARARK.

EngA-type G domains lie at 4–167 and 176–351; these read PVVA…KNIP and VQFC…ENHS. GTP-binding positions include 10–17, 57–61, 119–122, 182–189, 229–233, and 294–297; these read GRPNVGKS, DTGGI, NKLD, DTAGM, and NKWD. In terms of domain architecture, KH-like spans 352–436; sequence LRVQTNVLND…PIKIFARARK (85 aa).

Belongs to the TRAFAC class TrmE-Era-EngA-EngB-Septin-like GTPase superfamily. EngA (Der) GTPase family. Associates with the 50S ribosomal subunit.

In terms of biological role, GTPase that plays an essential role in the late steps of ribosome biogenesis. This chain is GTPase Der, found in Bacillus velezensis (strain DSM 23117 / BGSC 10A6 / LMG 26770 / FZB42) (Bacillus amyloliquefaciens subsp. plantarum).